The sequence spans 491 residues: MTSLSKSFMQSGRICAACFYLLFTLLSIPISFKVGGLECGLSFTVTLFTLYFITTTLNVLARRHGGRLYIFFTNCLYYSQHFIIASLLYLFLSGFSNDELGNVLKNKYNESESFLEALKNSLNSNQINYVLYYYYYRFVVQPWQFVLTKSTPFFTLSEGFFTILAIQAVGETNRWLSNDLNSNTWIISSLLTSGGVITASLYYLYRIYVTPIWPLSIQTASLLGLVLSMVCGLGLYGIVSQKGSVIESSLFFAYIVRCIYEISPKLATTATDEILNLFKDVWQKHQRNLPTADNLLCYFHNVILKNAEVLWGSFIPRGRKKTGDFHDKLISILSFEKVSLISKPFWKFFKNFTFSVPLSINEFCQVTIKMASESVSPAIVINLCFRVLMFYSATRIIPALQRKNDKQLRKSRRIMKGLYWYSPCILIAMYTHLILQYSGELKKDLCIWGCSEKWFGVDQPEIIVDSWGFWNWCNIFCTILVYATELIGSGS.

Topologically, residues 1–13 are cytoplasmic; sequence MTSLSKSFMQSGR. The helical transmembrane segment at 14–34 threads the bilayer; sequence ICAACFYLLFTLLSIPISFKV. At 35 to 40 the chain is on the lumenal side; it reads GGLECG. A helical transmembrane segment spans residues 41–61; it reads LSFTVTLFTLYFITTTLNVLA. Residues 62–74 lie on the Cytoplasmic side of the membrane; that stretch reads RRHGGRLYIFFTN. Residues 75–95 form a helical membrane-spanning segment; that stretch reads CLYYSQHFIIASLLYLFLSGF. Topologically, residues 96–149 are lumenal; the sequence is SNDELGNVLKNKYNESESFLEALKNSLNSNQINYVLYYYYYRFVVQPWQFVLTK. A helical transmembrane segment spans residues 150 to 170; that stretch reads STPFFTLSEGFFTILAIQAVG. The Cytoplasmic portion of the chain corresponds to 171–184; that stretch reads ETNRWLSNDLNSNT. Residues 185 to 205 form a helical membrane-spanning segment; it reads WIISSLLTSGGVITASLYYLY. The Lumenal portion of the chain corresponds to 206-218; the sequence is RIYVTPIWPLSIQ. The chain crosses the membrane as a helical span at residues 219–239; that stretch reads TASLLGLVLSMVCGLGLYGIV. At 240–294 the chain is on the cytoplasmic side; it reads SQKGSVIESSLFFAYIVRCIYEISPKLATTATDEILNLFKDVWQKHQRNLPTADN. Residues 295–315 traverse the membrane as a helical segment; sequence LLCYFHNVILKNAEVLWGSFI. Residues 316–373 are Lumenal-facing; the sequence is PRGRKKTGDFHDKLISILSFEKVSLISKPFWKFFKNFTFSVPLSINEFCQVTIKMASE. A helical membrane pass occupies residues 374-394; the sequence is SVSPAIVINLCFRVLMFYSAT. Residues 395-413 lie on the Cytoplasmic side of the membrane; it reads RIIPALQRKNDKQLRKSRR. The helical transmembrane segment at 414 to 434 threads the bilayer; that stretch reads IMKGLYWYSPCILIAMYTHLI. The Lumenal segment spans residues 435 to 461; it reads LQYSGELKKDLCIWGCSEKWFGVDQPE. A helical transmembrane segment spans residues 462-482; it reads IIVDSWGFWNWCNIFCTILVY. At 483–491 the chain is on the cytoplasmic side; it reads ATELIGSGS.

It localises to the endoplasmic reticulum membrane. The chain is Protein ICE2 (ICE2) from Saccharomyces cerevisiae (strain ATCC 204508 / S288c) (Baker's yeast).